Reading from the N-terminus, the 388-residue chain is Xylose isomerase (388 aa).

Catalysis depends on residues histidine 54 and aspartate 57. The Mg(2+) site is built by glutamate 181, glutamate 217, histidine 220, aspartate 245, aspartate 255, aspartate 257, and aspartate 287.

It belongs to the xylose isomerase family. In terms of assembly, homotetramer. Requires Mg(2+) as cofactor.

The protein resides in the cytoplasm. The enzyme catalyses alpha-D-xylose = alpha-D-xylulofuranose. This Streptomyces avermitilis (strain ATCC 31267 / DSM 46492 / JCM 5070 / NBRC 14893 / NCIMB 12804 / NRRL 8165 / MA-4680) protein is Xylose isomerase.